A 333-amino-acid chain; its full sequence is L-lactate dehydrogenase B chain (333 aa).

Residues 29–57 (GQVGMACAVSILGKSLCDELALVDVLEDK) and arginine 99 each bind NAD(+). The substrate site is built by arginine 106, asparagine 138, and arginine 169. Asparagine 138 contacts NAD(+). The Proton acceptor role is filled by histidine 193. Position 248 (threonine 248) interacts with substrate.

The protein belongs to the LDH/MDH superfamily. LDH family. In terms of assembly, homotetramer.

The protein localises to the cytoplasm. The catalysed reaction is (S)-lactate + NAD(+) = pyruvate + NADH + H(+). The protein operates within fermentation; pyruvate fermentation to lactate; (S)-lactate from pyruvate: step 1/1. Interconverts simultaneously and stereospecifically pyruvate and lactate with concomitant interconversion of NADH and NAD(+). The chain is L-lactate dehydrogenase B chain (LDHB) from Caiman crocodilus apaporiensis (Rio Apaporis caiman).